A 161-amino-acid polypeptide reads, in one-letter code: Protein-export protein SecB (161 aa).

The protein belongs to the SecB family. Homotetramer, a dimer of dimers. One homotetramer interacts with 1 SecA dimer.

The protein localises to the cytoplasm. In terms of biological role, one of the proteins required for the normal export of preproteins out of the cell cytoplasm. It is a molecular chaperone that binds to a subset of precursor proteins, maintaining them in a translocation-competent state. It also specifically binds to its receptor SecA. The chain is Protein-export protein SecB from Coxiella burnetii (strain Dugway 5J108-111).